The chain runs to 387 residues: 1,3-propanediol dehydrogenase (387 aa).

This sequence belongs to the iron-containing alcohol dehydrogenase family. As to quaternary structure, homooctamer. The cofactor is Fe cation.

It catalyses the reaction propane-1,3-diol + NAD(+) = 3-hydroxypropanal + NADH + H(+). Its activity is regulated as follows. Inhibited by the metal chelator 1,10-phenanthroline. Catalyzes the reduction of 3-hydroxypropanal. Is considerably less active with glyceraldehyde, propionaldehyde, acetaldehyde, and butyraldehyde. Also catalyzes the oxidation of various primary, secondary, and tertiary alcohols. Is most active with substrates containing two primary alcohol groups separated by one or two carbon atoms. 1,3-propanediol is the preferred substrate. The protein is 1,3-propanediol dehydrogenase of Citrobacter freundii.